The chain runs to 234 residues: Leucyl/phenylalanyl-tRNA--protein transferase (234 aa).

It belongs to the L/F-transferase family.

It localises to the cytoplasm. The enzyme catalyses N-terminal L-lysyl-[protein] + L-leucyl-tRNA(Leu) = N-terminal L-leucyl-L-lysyl-[protein] + tRNA(Leu) + H(+). It catalyses the reaction N-terminal L-arginyl-[protein] + L-leucyl-tRNA(Leu) = N-terminal L-leucyl-L-arginyl-[protein] + tRNA(Leu) + H(+). It carries out the reaction L-phenylalanyl-tRNA(Phe) + an N-terminal L-alpha-aminoacyl-[protein] = an N-terminal L-phenylalanyl-L-alpha-aminoacyl-[protein] + tRNA(Phe). Functions in the N-end rule pathway of protein degradation where it conjugates Leu, Phe and, less efficiently, Met from aminoacyl-tRNAs to the N-termini of proteins containing an N-terminal arginine or lysine. The sequence is that of Leucyl/phenylalanyl-tRNA--protein transferase from Hahella chejuensis (strain KCTC 2396).